The chain runs to 216 residues: MEPAFWQQRWADNQIGFHQAQVNPYLQTYWPQLQLAPGSRVLVPLCGKSLDLAWLAGQGHRVLGVELSRRAVEDFFREHGLEAEVRQQGAFEVWRSGDVQLWCGDFFALRAEDVADCVGLYDRAAVIALPVQMRARYMQLLSGLLPANCRGLVVTLEYDQSLLAGPPFSVRDEELRQGFAGWQVEQLEAVDVIEDSPKFVQAGASSLLERVYQVSR.

Residues Trp-10, Leu-45, Glu-66, and Arg-123 each coordinate S-adenosyl-L-methionine.

It belongs to the class I-like SAM-binding methyltransferase superfamily. TPMT family.

It localises to the cytoplasm. It carries out the reaction S-adenosyl-L-methionine + a thiopurine = S-adenosyl-L-homocysteine + a thiopurine S-methylether.. This Pseudomonas putida (strain ATCC 47054 / DSM 6125 / CFBP 8728 / NCIMB 11950 / KT2440) protein is Thiopurine S-methyltransferase.